We begin with the raw amino-acid sequence, 269 residues long: Tryptophan synthase alpha chain (269 aa).

Active-site proton acceptor residues include E49 and D60.

Belongs to the TrpA family. In terms of assembly, tetramer of two alpha and two beta chains.

The catalysed reaction is (1S,2R)-1-C-(indol-3-yl)glycerol 3-phosphate + L-serine = D-glyceraldehyde 3-phosphate + L-tryptophan + H2O. Its pathway is amino-acid biosynthesis; L-tryptophan biosynthesis; L-tryptophan from chorismate: step 5/5. In terms of biological role, the alpha subunit is responsible for the aldol cleavage of indoleglycerol phosphate to indole and glyceraldehyde 3-phosphate. The chain is Tryptophan synthase alpha chain from Pseudomonas putida (strain W619).